The primary structure comprises 80 residues: Defensin-like protein 204 (80 aa).

Residues 1-29 (MAKTFSSICFTTLLLVVLFISTEIPKSEA) form the signal peptide. Disulfide bonds link cysteine 43-cysteine 64, cysteine 48-cysteine 73, and cysteine 52-cysteine 75.

The protein belongs to the DEFL family.

The protein localises to the secreted. The sequence is that of Defensin-like protein 204 from Arabidopsis thaliana (Mouse-ear cress).